The primary structure comprises 106 residues: Urease subunit beta (106 aa).

It belongs to the urease beta subunit family. Heterotrimer of UreA (gamma), UreB (beta) and UreC (alpha) subunits. Three heterotrimers associate to form the active enzyme.

It is found in the cytoplasm. The enzyme catalyses urea + 2 H2O + H(+) = hydrogencarbonate + 2 NH4(+). It functions in the pathway nitrogen metabolism; urea degradation; CO(2) and NH(3) from urea (urease route): step 1/1. The chain is Urease subunit beta from Acinetobacter baumannii (strain SDF).